Here is a 624-residue protein sequence, read N- to C-terminus: MDYLSSMGSQTARFCLILLFLFYYLPCALSQDDLWGCGTPFRCGNITAGFPFLGGIRGEVCGHHSLKLNCNKHSNTTSLIFSGHNYTVLYIDNNNNSVTLGLSRQDFSGPFCSASFSSTLLSSGLFQNLPSYKSLTVFYACDPRRHFLGNFTCPVKGLGSIIQNSTYGILCDGSFSVPVPTSFVSEEEVLDLTHLESVLRKGFEVKLNIDEIPCPLECFSSRANCLFLAGSCCKYHDRTTTCGGDTGDLLREIIPNTRSILITIGQVVGFHVFIIVVMIIAFLFWRRKKVNDLRKQNLEALVTSRRYSYRQIKKITKSFTEVVGRGGFGTVYKGNLRDGRKVAVKILKDSNGNCEDFINEVASISQTSHVNIVSLLGFCFEKSKRAIVYEFLENGSLDQSSNLDVSTLYGIALGVARGIEYLHFGCKKRIVHFDIKPQNVLLDENLKPKVADFGLAKLCEKQESILSLLDTRGTIGYIAPELFSRVYGNVSHKSDVYSYGMLVLEMTGARNKERVQNADSNNSSAYFPDWIFKDLENGDYVKLLADGLTREEEDIAKKMILVGLWCIQFRPSDRPSMNKVVGMMEGNLDSLDPPPKPLLHMPMQNNNAESSQPSEEDSSIYSEV.

The first 30 residues, 1–30 (MDYLSSMGSQTARFCLILLFLFYYLPCALS), serve as a signal peptide directing secretion. Residues 31–263 (QDDLWGCGTP…IPNTRSILIT (233 aa)) lie on the Extracellular side of the membrane. N-linked (GlcNAc...) asparagine glycosylation is found at Asn45, Asn75, Asn85, Asn95, Asn150, and Asn164. The chain crosses the membrane as a helical span at residues 264 to 284 (IGQVVGFHVFIIVVMIIAFLF). The Cytoplasmic portion of the chain corresponds to 285 to 624 (WRRKKVNDLR…EEDSSIYSEV (340 aa)). The Protein kinase domain maps to 317-599 (KSFTEVVGRG…SLDPPPKPLL (283 aa)). Residues 323-331 (VGRGGFGTV) and Lys345 each bind ATP. Asp434 (proton acceptor) is an active-site residue. The disordered stretch occupies residues 587–624 (NLDSLDPPPKPLLHMPMQNNNAESSQPSEEDSSIYSEV). The segment covering 603–624 (MQNNNAESSQPSEEDSSIYSEV) has biased composition (polar residues).

This sequence belongs to the protein kinase superfamily. Ser/Thr protein kinase family.

The protein resides in the membrane. The enzyme catalyses L-seryl-[protein] + ATP = O-phospho-L-seryl-[protein] + ADP + H(+). The catalysed reaction is L-threonyl-[protein] + ATP = O-phospho-L-threonyl-[protein] + ADP + H(+). In Arabidopsis thaliana (Mouse-ear cress), this protein is LEAF RUST 10 DISEASE-RESISTANCE LOCUS RECEPTOR-LIKE PROTEIN KINASE-like 2.2.